Reading from the N-terminus, the 507-residue chain is Probable circularly permuted 1,3-beta-glucanase P23A10.11c YJL171C (507 aa).

An N-terminal signal peptide occupies residues 1-22 (MIAKSFIASFLFLCFAFSGVKA). Residues 228–264 (AAPPDSASESTPASTSYASSTTSATSTSTTSGSSGSS) are compositionally biased toward low complexity. Residues 228 to 266 (AAPPDSASESTPASTSYASSTTSATSTSTTSGSSGSSDW) form a disordered region. An ExDxxE motif motif is present at residues 412 to 417 (EFDIFE). A glycan (N-linked (GlcNAc...) asparagine) is linked at Asn480.

This sequence belongs to the PGA52 family.

The protein localises to the secreted. The enzyme catalyses Hydrolysis of (1-&gt;3)-beta-D-glucosidic linkages in (1-&gt;3)-beta-D-glucans.. Its function is as follows. Probable circularly permuted 1,3-beta-glucanase involved in cell wall modification through beta-1,3-glucan network alterations such as increased branching or remodeling. The protein is Probable circularly permuted 1,3-beta-glucanase P23A10.11c YJL171C of Schizosaccharomyces pombe (strain 972 / ATCC 24843) (Fission yeast).